The sequence spans 215 residues: Probable phosphoglycerate mutase GpmB (215 aa).

Residues 8 to 15 (RHGESEWN), 21 to 22 (QG), Arg-58, Arg-60, 82 to 85 (ELHM), and 151 to 152 (GI) each bind substrate. His-9 functions as the Tele-phosphohistidine intermediate in the catalytic mechanism. Residue Glu-82 is the Proton donor/acceptor of the active site.

This sequence belongs to the phosphoglycerate mutase family. GpmB subfamily.

The catalysed reaction is (2R)-2-phosphoglycerate = (2R)-3-phosphoglycerate. It participates in carbohydrate degradation; glycolysis; pyruvate from D-glyceraldehyde 3-phosphate: step 3/5. The polypeptide is Probable phosphoglycerate mutase GpmB (Photorhabdus laumondii subsp. laumondii (strain DSM 15139 / CIP 105565 / TT01) (Photorhabdus luminescens subsp. laumondii)).